Reading from the N-terminus, the 935-residue chain is DNA repair protein rev1 (935 aa).

Residues 59–147 (SKSDLFHGLA…KILPWINYRT (89 aa)) form the BRCT domain. Over residues 162-178 (SKPSQPEGNLEDIQTSS) the composition is skewed to polar residues. The tract at residues 162-193 (SKPSQPEGNLEDIQTSSQEEEHDNEKDKTKES) is disordered. Positions 184 to 193 (DNEKDKTKES) are enriched in basic and acidic residues. The interaction with target DNA stretch occupies residues 235–245 (FFSSSRLHHLS). DCTP-binding positions include R240 and 283–287 (DFDCF). A UmuC domain is found at 279–460 (LLHVDFDCFF…LSVQDLPGVG (182 aa)). Mg(2+)-binding residues include D283 and F284. The interaction with target DNA stretch occupies residues 310–312 (IKN). DCTP contacts are provided by residues 317-323 (SCNYEAR), N329, and D378. Mg(2+) contacts are provided by D378 and E379. Interaction with target DNA regions lie at residues 460–463 (GSSQ) and 517–525 (RRSISVDVN).

Belongs to the DNA polymerase type-Y family. Mg(2+) serves as cofactor.

Its subcellular location is the nucleus. The protein resides in the nucleolus. It is found in the mitochondrion. The protein localises to the cytoplasm. It localises to the cytoskeleton. Its subcellular location is the spindle. Deoxycytidyl transferase involved in DNA repair. Transfers a dCMP residue from dCTP to the 3'-end of a DNA primer in a template-dependent reaction. May assist in the first step in the bypass of abasic lesions by the insertion of a nucleotide opposite the lesion. Required for normal induction of mutations by physical and chemical agents. Involved in mitochondrial DNA mutagenesis. In Schizosaccharomyces pombe (strain 972 / ATCC 24843) (Fission yeast), this protein is DNA repair protein rev1.